A 341-amino-acid chain; its full sequence is S-adenosylmethionine:tRNA ribosyltransferase-isomerase (341 aa).

The protein belongs to the QueA family. As to quaternary structure, monomer.

It is found in the cytoplasm. It catalyses the reaction 7-aminomethyl-7-carbaguanosine(34) in tRNA + S-adenosyl-L-methionine = epoxyqueuosine(34) in tRNA + adenine + L-methionine + 2 H(+). It functions in the pathway tRNA modification; tRNA-queuosine biosynthesis. Transfers and isomerizes the ribose moiety from AdoMet to the 7-aminomethyl group of 7-deazaguanine (preQ1-tRNA) to give epoxyqueuosine (oQ-tRNA). In Clostridioides difficile (strain 630) (Peptoclostridium difficile), this protein is S-adenosylmethionine:tRNA ribosyltransferase-isomerase.